Here is a 237-residue protein sequence, read N- to C-terminus: DNA repair protein RecO (237 aa).

This sequence belongs to the RecO family.

In terms of biological role, involved in DNA repair and RecF pathway recombination. The polypeptide is DNA repair protein RecO (Actinobacillus succinogenes (strain ATCC 55618 / DSM 22257 / CCUG 43843 / 130Z)).